Reading from the N-terminus, the 384-residue chain is Probable beta-1,3-galactosyltransferase 1 (384 aa).

The chain crosses the membrane as a helical; Signal-anchor for type II membrane protein span at residues 21 to 43 (SVFFMCLASFCLGMFFTNRMWNI). Asn-73 and Asn-105 each carry an N-linked (GlcNAc...) asparagine glycan.

This sequence belongs to the glycosyltransferase 31 family. Mn(2+) serves as cofactor.

The protein localises to the golgi apparatus membrane. It functions in the pathway protein modification; protein glycosylation. Its function is as follows. Beta-1,3-galactosyltransferase that transfers galactose from UDP-galactose to substrates with a terminal glycosyl residue. This chain is Probable beta-1,3-galactosyltransferase 1 (B3GALT1), found in Arabidopsis thaliana (Mouse-ear cress).